The primary structure comprises 259 residues: Small ribosomal subunit protein uS7m (259 aa).

The transit peptide at 1–39 directs the protein to the mitochondrion; the sequence is MLRLIKQPLFRCASSGHLMKESLVFIHQTRTFQVGKFTS. Thr157 bears the Phosphothreonine mark.

It belongs to the universal ribosomal protein uS7 family. Component of the mitochondrial small ribosomal subunit (mt-SSU). Mature yeast 74S mitochondrial ribosomes consist of a small (37S) and a large (54S) subunit. The 37S small subunit contains a 15S ribosomal RNA (15S mt-rRNA) and at least 32 different proteins. The 54S large subunit contains a 21S rRNA (21S mt-rRNA) and at least 45 different proteins.

The protein resides in the mitochondrion. Functionally, component of the mitochondrial ribosome (mitoribosome), a dedicated translation machinery responsible for the synthesis of mitochondrial genome-encoded proteins, including at least some of the essential transmembrane subunits of the mitochondrial respiratory chain. The mitoribosomes are attached to the mitochondrial inner membrane and translation products are cotranslationally integrated into the membrane. The sequence is that of Small ribosomal subunit protein uS7m (rsm7) from Schizosaccharomyces pombe (strain 972 / ATCC 24843) (Fission yeast).